The sequence spans 326 residues: Tagatose 1,6-diphosphate aldolase (326 aa).

Belongs to the aldolase LacD family.

The enzyme catalyses D-tagatofuranose 1,6-bisphosphate = D-glyceraldehyde 3-phosphate + dihydroxyacetone phosphate. It participates in carbohydrate metabolism; D-tagatose 6-phosphate degradation; D-glyceraldehyde 3-phosphate and glycerone phosphate from D-tagatose 6-phosphate: step 2/2. The chain is Tagatose 1,6-diphosphate aldolase from Streptococcus pneumoniae serotype 4 (strain ATCC BAA-334 / TIGR4).